Reading from the N-terminus, the 936-residue chain is MAGGDRGSGGTGNVRRLVIVESPTKARKIAGYLGSNYVVESSRGHIRDLPRNAADVPAKFKSEPWARLGVNVDQNFEPLYIVSPEKKSTVTELKGLLKDVDELYLATDGDREGEAIAWHLLETLKPRVPVKRMVFHEITEPAIRNAAENPRDLDIALVDAQETRRILDRLYGYEVSPVLWKKVAPKLSAGRVQSVATRIIVQRERERMAFHSASYWDVTAELDASVSDPSASPPKFTAKLNTVDGRRVATGRDFDSLGQLKRPDEVLVLDEASAGALASGLRGAQLAVTSVEQKPYTRRPYAPFMTSTLQQEAARKLRFSSERTMSIAQRLYENGYITYMRTDSTTLSESAINAARTQARQLYGEEYVHPSPRQYTRKVKNAQEAHEAIRPAGDVFQTPGQLHSALDTDEFRLYELIWQRTVASQMADARGTTLSLRIGGSASSGEQVVFNASGRTITFPGFLKAYVESIDELAGGESDDAESRLPNLTQGQRVDAADLSADGHQTSPPARYTEASLIKALEELGIGRPSTYSSIIKTIQDRGYVQKKGSALVPSWVAFAVVGLLEQHFGRLVDYDFTAAMEDELDEIANGQEQRTNWLNNFYFGGEHGVEGSIARAGGLKQLVGGNLEGIDAREVNSIKVFDDSEGRPVYVRVGRNGPYLERMVDDPDNPGEQKPQRANLKEDLTPDELTPELAEKLFATPQEGRSLGIDPETGHEIVAKDGRFGPYVTEVLPEPEDGGDDGTAGTPAKKGKKPTGPKPRTGSLFRSMDLETVTLEDALKLLSLPRVVGVDPTTNEEITAQNGRYGPYLKRGTDSRSLATEDQIFTITLDEALKIYAEPKRRGRQAASAPPLRELGNDPVSGKPMVIKDGRFGPYVTDGETNASLRKGDDVLTITDERASELLADRRARGPVKKKAPAKKAAKKAPAKKAAAKKA.

A Toprim domain is found at 15-139 (RRLVIVESPT…VKRMVFHEIT (125 aa)). The Mg(2+) site is built by Glu-21 and Asp-108. The Topo IA-type catalytic domain occupies 154 to 611 (DIALVDAQET…FYFGGEHGVE (458 aa)). The interaction with DNA stretch occupies residues 188-193 (SAGRVQ). Catalysis depends on Tyr-339, which acts as the O-(5'-phospho-DNA)-tyrosine intermediate. 4 disordered regions span residues 661 to 688 (LERMVDDPDNPGEQKPQRANLKEDLTPD), 732 to 767 (VLPEPEDGGDDGTAGTPAKKGKKPTGPKPRTGSLFR), 841 to 884 (KRRG…ETNA), and 903 to 936 (LLADRRARGPVKKKAPAKKAAKKAPAKKAAAKKA). Positions 910–936 (RGPVKKKAPAKKAAKKAPAKKAAAKKA) are enriched in basic residues.

It belongs to the type IA topoisomerase family. Monomer. Mg(2+) is required as a cofactor.

It catalyses the reaction ATP-independent breakage of single-stranded DNA, followed by passage and rejoining.. Functionally, releases the supercoiling and torsional tension of DNA, which is introduced during the DNA replication and transcription, by transiently cleaving and rejoining one strand of the DNA duplex. Introduces a single-strand break via transesterification at a target site in duplex DNA. The scissile phosphodiester is attacked by the catalytic tyrosine of the enzyme, resulting in the formation of a DNA-(5'-phosphotyrosyl)-enzyme intermediate and the expulsion of a 3'-OH DNA strand. The free DNA strand then undergoes passage around the unbroken strand, thus removing DNA supercoils. Finally, in the religation step, the DNA 3'-OH attacks the covalent intermediate to expel the active-site tyrosine and restore the DNA phosphodiester backbone. In terms of biological role, relaxes negatively (but not positively) supercoiled DNA, concatanates and knots circular ssDNA at 52 but not 37 degrees Celsius. Preferentially nicks supercoiled DNA at C(G/T)CTT, cutting between the TT residues, binds ss and dsDNA with the recognition site. The sequence is that of DNA topoisomerase 1 from Mycolicibacterium smegmatis (strain ATCC 700084 / mc(2)155) (Mycobacterium smegmatis).